The following is a 734-amino-acid chain: MALRFPRFSQGLAQDPTTRRIWFGIATAHDFESHDDITEERLYQNIFASHFGQLAIIFLWTSGNLFHVAWQGNFESWVQDPLHVRPIAHAIWDPHFGQPAVEAFTRGGAPGPVNIAYSGVYQWWYTIGLRTNEDLYTGALFLLFLSAISLIAGWLHLQPKWKPSVSWFKNAESRLNHHLSGLFGVSSLAWTGHLVHVAIPGSRGEYVRWNNFLDVLPHPQGLGPLFTGQWNLYAQNPDSSSHLFGTSQGAGTAILTLLGGFHPQTQSLWLTDIAHHHLAIAFIFLVAGHMYRTNFGIGHSMKDLLEAHIPPGGRLGRGHKGLYDTINNSIHFQLGLALASLGVITSLVAQHMYSLPAYAFIAQDFTTQAALYTHHQYIAGFIMTGAFAHGAIFFIRDYNPEQNEDNVLARMLDHKEAIISHLSWASLFLGFHTLGLYVHNDVMLAFGTPEKQILIEPIFAQWIQSAHGKTSYGFDVLLSSTTGPAFNAGRSIWLPGWLNAVNENSNSLFLTIGPGDFLVHHAIALGLHTTTLILVKGALDARGSKLMPDKKDFGYSFPCDGPGRGGTCDISAWDAFYLAVFWMLNTIGWVTFYWHWKHITLWQGNVSQFNESSTYLMGWLRDYLWLNSSQLINGYNPFGMNSLSVWAWMFLFGHLVWATGFMFLISWRGYWQELIETLAWAHERTPLANLIRWRDKPVALSIVQARLVGLAHFSVGYIFTYAAFLIASTSGKFG.

Transmembrane regions (helical) follow at residues 46 to 69 (IFAS…FHVA), 135 to 158 (LYTG…LHLQ), 175 to 199 (LNHH…HVAI), 273 to 291 (IAHH…GHMY), 330 to 353 (IHFQ…QHMY), 369 to 395 (AALY…IFFI), 417 to 439 (AIIS…LYVH), and 517 to 535 (FLVH…LILV). Cysteine 559 and cysteine 568 together coordinate [4Fe-4S] cluster. The next 2 helical transmembrane spans lie at 575 to 596 (AFYL…YWHW) and 643 to 665 (LSVW…MFLI). 3 residues coordinate chlorophyll a: histidine 654, methionine 662, and tyrosine 670. A phylloquinone-binding site is contributed by tryptophan 671. The helical transmembrane segment at 707–727 (LVGLAHFSVGYIFTYAAFLIA) threads the bilayer.

It belongs to the PsaA/PsaB family. As to quaternary structure, the PsaA/B heterodimer binds the P700 chlorophyll special pair and subsequent electron acceptors. PSI consists of a core antenna complex that captures photons, and an electron transfer chain that converts photonic excitation into a charge separation. The eukaryotic PSI reaction center is composed of at least 11 subunits. P700 is a chlorophyll a/chlorophyll a' dimer, A0 is one or more chlorophyll a, A1 is one or both phylloquinones and FX is a shared 4Fe-4S iron-sulfur center. is required as a cofactor.

Its subcellular location is the plastid. The protein localises to the chloroplast thylakoid membrane. The catalysed reaction is reduced [plastocyanin] + hnu + oxidized [2Fe-2S]-[ferredoxin] = oxidized [plastocyanin] + reduced [2Fe-2S]-[ferredoxin]. PsaA and PsaB bind P700, the primary electron donor of photosystem I (PSI), as well as the electron acceptors A0, A1 and FX. PSI is a plastocyanin-ferredoxin oxidoreductase, converting photonic excitation into a charge separation, which transfers an electron from the donor P700 chlorophyll pair to the spectroscopically characterized acceptors A0, A1, FX, FA and FB in turn. Oxidized P700 is reduced on the lumenal side of the thylakoid membrane by plastocyanin. This is Photosystem I P700 chlorophyll a apoprotein A2 from Vitis vinifera (Grape).